Reading from the N-terminus, the 482-residue chain is Proton extrusion protein PxcA (482 aa).

The next 4 helical transmembrane spans lie at 265-285 (FVLG…NLVI), 359-379 (PLKN…YFVL), 406-426 (IIIL…WEVI), and 442-462 (FINM…KYWI).

It belongs to the CemA family.

Its subcellular location is the cell inner membrane. In terms of biological role, required for H(+) efflux immediately after light irradiation to form a rapid H(+) concentration gradient across the thylakoid membranes. Together with PxcL, contributes to transient H(+) uptake following dark to light transition. This chain is Proton extrusion protein PxcA, found in Acaryochloris marina (strain MBIC 11017).